Here is a 626-residue protein sequence, read N- to C-terminus: Janus kinase and microtubule-interacting protein 1 (626 aa).

The disordered stretch occupies residues 1–25 (MSKKGRSKGEKPETETDSVQMANEE). The interval 1-365 (MSKKGRSKGE…KLKSLTRENV (365 aa)) is mediates association with microtubules. Coiled coils occupy residues 13–255 (ETET…EAER) and 284–413 (ERDV…DDLS). The mediates interaction with TYK2 and GABBR1 stretch occupies residues 365-626 (VEMKEKLSAQ…ILFEPKLKFV (262 aa)). A Phosphoserine modification is found at Ser-382. A compositionally biased stretch (polar residues) spans 452-461 (ETLSETSYNT). A disordered region spans residues 452-481 (ETLSETSYNTDRTDRTPATPEEDLDETTTR). At Thr-470 the chain carries Phosphothreonine. The stretch at 490-604 (QLTREYQALQ…EFRVLELEVR (115 aa)) forms a coiled coil.

The protein belongs to the JAKMIP family. In terms of assembly, homodimer. Interacts with JAK1 and TYK2. Forms a complex with GABBR1 and KIF5B/kinesin-1. In terms of processing, phosphorylated. As to expression, specifically expressed in brain and testis by spermatogonia, spermatocytes, spermatozoa and Sertoli cells (at protein level).

The protein resides in the cytoplasm. It localises to the cytoskeleton. The protein localises to the membrane. Associates with microtubules and may play a role in the microtubule-dependent transport of the GABA-B receptor. May play a role in JAK1 signaling and regulate microtubule cytoskeleton rearrangements. This chain is Janus kinase and microtubule-interacting protein 1 (Jakmip1), found in Rattus norvegicus (Rat).